We begin with the raw amino-acid sequence, 649 residues long: Serine/threonine kinase-like domain-containing protein STKLD1 (649 aa).

The segment covering 1–13 has biased composition (basic and acidic residues); that stretch reads MLGPESDGRRPTQ. Positions 1 to 23 are disordered; that stretch reads MLGPESDGRRPTQGERGPGYPGE. In terms of domain architecture, Protein kinase spans 28–379; that stretch reads YQVLYQLNPG…CNQAITSAVL (352 aa). Residues 34–42 and lysine 57 contribute to the ATP site; that span reads LNPGALGVN. A disordered region spans residues 621–640; the sequence is FSKPGLPPGGSPQPGCTASG.

It belongs to the protein kinase superfamily. Ser/Thr protein kinase family. STKL subfamily.

In Macaca fascicularis (Crab-eating macaque), this protein is Serine/threonine kinase-like domain-containing protein STKLD1 (STKLD1).